A 287-amino-acid polypeptide reads, in one-letter code: Acetylglutamate kinase (287 aa).

Residues 65–66, R87, and N181 contribute to the substrate site; that span reads GG.

The protein belongs to the acetylglutamate kinase family. ArgB subfamily.

It is found in the cytoplasm. It catalyses the reaction N-acetyl-L-glutamate + ATP = N-acetyl-L-glutamyl 5-phosphate + ADP. It participates in amino-acid biosynthesis; L-arginine biosynthesis; N(2)-acetyl-L-ornithine from L-glutamate: step 2/4. Catalyzes the ATP-dependent phosphorylation of N-acetyl-L-glutamate. This chain is Acetylglutamate kinase, found in Syntrophomonas wolfei subsp. wolfei (strain DSM 2245B / Goettingen).